The following is a 41-amino-acid chain: Large ribosomal subunit protein bL36B (41 aa).

It belongs to the bacterial ribosomal protein bL36 family.

The polypeptide is Large ribosomal subunit protein bL36B (Actinobacillus pleuropneumoniae serotype 5b (strain L20)).